A 91-amino-acid polypeptide reads, in one-letter code: Small ribosomal subunit protein uS19 (91 aa).

This sequence belongs to the universal ribosomal protein uS19 family.

Its function is as follows. Protein S19 forms a complex with S13 that binds strongly to the 16S ribosomal RNA. This chain is Small ribosomal subunit protein uS19, found in Fusobacterium nucleatum subsp. nucleatum (strain ATCC 25586 / DSM 15643 / BCRC 10681 / CIP 101130 / JCM 8532 / KCTC 2640 / LMG 13131 / VPI 4355).